A 203-amino-acid chain; its full sequence is Urease accessory protein UreG (203 aa).

11-18 contributes to the GTP binding site; sequence GPVGSGKT.

Belongs to the SIMIBI class G3E GTPase family. UreG subfamily. As to quaternary structure, homodimer. UreD, UreF and UreG form a complex that acts as a GTP-hydrolysis-dependent molecular chaperone, activating the urease apoprotein by helping to assemble the nickel containing metallocenter of UreC. The UreE protein probably delivers the nickel.

The protein resides in the cytoplasm. In terms of biological role, facilitates the functional incorporation of the urease nickel metallocenter. This process requires GTP hydrolysis, probably effectuated by UreG. The chain is Urease accessory protein UreG from Prochlorococcus marinus (strain MIT 9215).